The sequence spans 143 residues: UPF0651 protein P31B10.02, mitochondrial (143 aa).

In terms of domain architecture, Oxidoreductase-like spans 48–93; sequence IYDGIRVPPKPEEPLNCCQSGCAICVWDVYADDLEEYNRARRKAKR.

This sequence belongs to the UPF0651 family.

It localises to the mitochondrion. The polypeptide is UPF0651 protein P31B10.02, mitochondrial (Schizosaccharomyces pombe (strain 972 / ATCC 24843) (Fission yeast)).